Here is a 142-residue protein sequence, read N- to C-terminus: NTF2-related export protein 2 (142 aa).

Residues 17–136 enclose the NTF2 domain; sequence AAEEFVNIYY…WKIASDCFRF (120 aa).

Associates with NXF1, NXF2, NXF3 and NXF5.

It localises to the nucleus. The protein resides in the cytoplasm. Functionally, regulator of protein export for NES-containing proteins. Also plays a role in mRNA nuclear export. In Mus musculus (Mouse), this protein is NTF2-related export protein 2 (Nxt2).